A 1184-amino-acid polypeptide reads, in one-letter code: Probable phospholipid-transporting ATPase 12 (1184 aa).

At 1–75 (MATVSGRRRK…TTKYTLATFL (75 aa)) the chain is on the cytoplasmic side. A helical membrane pass occupies residues 76 to 97 (PKSLFEQFRRVANFYFLVVGIL). The Extracellular portion of the chain corresponds to 98–101 (SFTP). The helical transmembrane segment at 102–124 (LAPYTAVSAIVPLTFVILATMFK) threads the bilayer. At 125–306 (EGVEDWRRKQ…SMIERKMDKI (182 aa)) the chain is on the cytoplasmic side. The helical transmembrane segment at 307–328 (IYLMFLMVFSLAFFGSVLFGIW) threads the bilayer. Residues 329 to 364 (TRDDFQNGVMERWYLKPDDSSIFFDPKRAPMAAIYH) are Extracellular-facing. A helical transmembrane segment spans residues 365 to 382 (FLTALMLNSYFIPISLYV). The Cytoplasmic segment spans residues 383-921 (SIEIVKVLQS…HGHWCYRRIS (539 aa)). The active-site 4-aspartylphosphate intermediate is Asp430. Residues Asp866 and Asp870 each contribute to the Mg(2+) site. A helical transmembrane segment spans residues 922 to 941 (KMICYFFYKNITFGFTLFLY). The Extracellular segment spans residues 942–955 (EAYTSFSATPAYND). The chain crosses the membrane as a helical span at residues 956–975 (WYLSLYSVFFTSLPVICLGI). The Cytoplasmic segment spans residues 976 to 1005 (FDQDVSAPFCLKFPVLYQEGVQNLLFSWRR). Residues 1006–1028 (ILSWMFHGFCSAIIIFFLCKTSL) traverse the membrane as a helical segment. The Extracellular portion of the chain corresponds to 1029 to 1041 (ESQAFNHEGKTAG). A helical membrane pass occupies residues 1042–1064 (RDILGGTMYTCVVWVVSLQMVLT). Residues 1065-1070 (ISYFTL) are Cytoplasmic-facing. The chain crosses the membrane as a helical span at residues 1071-1091 (IQHVVVWGSVVIWYLFLMVYG). Topologically, residues 1092–1108 (SLPIRMSTDAYMVFLEA) are extracellular. A helical membrane pass occupies residues 1109–1133 (LAPAPSYWITTLFVVLSTMMPYFIF). At 1134 to 1184 (SAIQMRFFPMSHGTVQLLRYEDQCSNSGNFEMGRQGSVRPTLVMRSHQPES) the chain is on the cytoplasmic side.

It belongs to the cation transport ATPase (P-type) (TC 3.A.3) family. Type IV subfamily.

It localises to the membrane. It catalyses the reaction ATP + H2O + phospholipidSide 1 = ADP + phosphate + phospholipidSide 2.. Involved in transport of phospholipids. The chain is Probable phospholipid-transporting ATPase 12 from Arabidopsis thaliana (Mouse-ear cress).